A 437-amino-acid chain; its full sequence is Phosphoribosylamine--glycine ligase (437 aa).

One can recognise an ATP-grasp domain in the interval 110–322 (KNLLRSADIP…LVEVMQAVVD (213 aa)). 142–203 (EPTDPVNVVV…EERLTGPEVS (62 aa)) provides a ligand contact to ATP. The Mg(2+) site is built by glutamate 292 and asparagine 294.

Belongs to the GARS family. The cofactor is Mg(2+). It depends on Mn(2+) as a cofactor.

The catalysed reaction is 5-phospho-beta-D-ribosylamine + glycine + ATP = N(1)-(5-phospho-beta-D-ribosyl)glycinamide + ADP + phosphate + H(+). The protein operates within purine metabolism; IMP biosynthesis via de novo pathway; N(1)-(5-phospho-D-ribosyl)glycinamide from 5-phospho-alpha-D-ribose 1-diphosphate: step 2/2. In Rhodopirellula baltica (strain DSM 10527 / NCIMB 13988 / SH1), this protein is Phosphoribosylamine--glycine ligase.